A 72-amino-acid chain; its full sequence is uncharacterized protein (72 aa).

The Cytoplasmic segment spans residues 1–12; it reads MSKHKHEWTESV. A helical membrane pass occupies residues 13 to 32; it reads ANSGPASILSYCASSILMTV. Over 33–46 the chain is Lumenal; sequence TNKFVVNLDNFNMN. Residues 47–69 form a helical membrane-spanning segment; the sequence is FVMLFVQSLVCTVTLCILRIVGV. The Cytoplasmic portion of the chain corresponds to 70–72; that stretch reads ANF.

This sequence belongs to the TPT transporter family. SLC35D subfamily.

The protein resides in the membrane. This is an uncharacterized protein from Saccharomyces cerevisiae (strain RM11-1a) (Baker's yeast).